The chain runs to 1015 residues: MNSDINMYLGREKAGIMRKRALLLRKGCSFEITSSASEDLGCRRGEFSRKHYGSVELLISSDADGAIQRAGRFRVENGSIDEISDYTPGTWRRTDVHLENPEYHTRWYFKYFLGKVHQNYVGTDAEKNPFFLSVVLSDQNNQRVPQYRAILWRKTGTLKISLPYSPTKTLSVKSILSAMNVDRFEKGPREILNPEIQKDLLVLEEQEGSVNFKFGVLYAKDGQLTDDEMFSNEMGSETFEKFLNLLGDTICLQGWAGYRGGLDTKNDTTGINSIYTVYQGHELMFHVSTMLPYSKENKQQVERKRHIGNDIVTIVFQEGDDASPSFKPSMIRSHFTHIFALVRYNSQNDSYRLKIFSEESVPLFGPPLPSPPVFTDHQEFRDFLLVKLINGEKATLETPTFAQKRQRTLDMLIRSLYQDLMPDMHKNMLNRRSFSDVLPESPKSARKKEEARQAEFVRVGQALKLKTIVRGDAPTSLVTTGLCRKEPWESQSFCSSFPYDIVCGDSWGQSLLVATDSAGVMLLEDSPTLPPVQVFDKTLTVKQMHVLEPQDLLIARADKGKDARLYVYRLSTLKQGIEERQLVRTKCDSRENKLEKTKGCHLYSINTHHGVELRIVAAIRNKLLLITRKQSRLECVSSIATVTGSTDSPVEEFQYIREICLCDSPVVMALVDGPTGENDHMICVAYRHQFDLINESTGDAYRLHHVDSNRVNFVAAIDVYEDGEAGLLLCYNNICVYKKVCPFNGATPMIQPNTSDFHFSWNQMPNATVCAFPYILAFTTDSIEIRLVVNGNLVYTAVVPELQLTASRSDIYFISSAPINSASNCSSRDTSSQSSPQTPTGYEMPVFPSPLGDGETQSKHIYKIPLSNLVGRSIERPLKSPLVNKVLTAPAPSMTGPAPMIGSTTSLSLSRMEIKEIASRTRKELLGLTEEPSSKADGNSVKQRRMSKKNKEEEQKRTAEISIAEQVGMESVDGETDIQQLCPSGSEVEVRDDSPPTANPFTFSTSFEDDILDLK.

The Rap-GAP domain occupies 200–416; the sequence is LLVLEEQEGS…RTLDMLIRSL (217 aa). Residues 498-812 enclose the CNH domain; it reads PYDIVCGDSW…QLTASRSDIY (315 aa). Disordered stretches follow at residues 821-842 and 924-1004; these read SASNCSSRDTSSQSSPQTPTGY and ELLG…FTFS. A compositionally biased stretch (low complexity) spans 823 to 835; sequence SNCSSRDTSSQSS. Over residues 949–959 the composition is skewed to basic and acidic residues; the sequence is KNKEEEQKRTA.

It belongs to the GARNL3 family.

This Danio rerio (Zebrafish) protein is GTPase-activating Rap/Ran-GAP domain-like protein 3 (garnl3).